The sequence spans 217 residues: Protein-L-isoaspartate O-methyltransferase (217 aa).

Ser62 is a catalytic residue.

This sequence belongs to the methyltransferase superfamily. L-isoaspartyl/D-aspartyl protein methyltransferase family.

It is found in the cytoplasm. It catalyses the reaction [protein]-L-isoaspartate + S-adenosyl-L-methionine = [protein]-L-isoaspartate alpha-methyl ester + S-adenosyl-L-homocysteine. Functionally, catalyzes the methyl esterification of L-isoaspartyl residues in peptides and proteins that result from spontaneous decomposition of normal L-aspartyl and L-asparaginyl residues. It plays a role in the repair and/or degradation of damaged proteins. In Trichlorobacter lovleyi (strain ATCC BAA-1151 / DSM 17278 / SZ) (Geobacter lovleyi), this protein is Protein-L-isoaspartate O-methyltransferase.